Consider the following 1015-residue polypeptide: DNA polymerase catalytic subunit (1015 aa).

It belongs to the DNA polymerase type-B family. As to quaternary structure, forms a complex with the major DNA-binding protein BALF2, the DNA polymerase processivity factor BMRF1, and the alkaline exonuclease BGLF5. Interacts with the putative helicase-primase complex composed of BBLF4, BSLF1 and BBLF2/3 proteins; these interactions may coordinate leading and lagging strand DNA synthesis at the replication fork.

It localises to the host nucleus. It carries out the reaction DNA(n) + a 2'-deoxyribonucleoside 5'-triphosphate = DNA(n+1) + diphosphate. Replicates viral genomic DNA in the late phase of lytic infection, producing long concatemeric DNA. The replication complex is composed of six viral proteins: the DNA polymerase, processivity factor, primase, primase-associated factor, helicase, and ssDNA-binding protein. This chain is DNA polymerase catalytic subunit, found in Homo sapiens (Human).